Consider the following 462-residue polypeptide: Ubiquitin carboxyl-terminal hydrolase calypso (462 aa).

Positions Gly29 to Pro260 constitute a UCH catalytic domain. The active-site Nucleophile is the Cys115. His197 (proton donor) is an active-site residue. A ULD domain is found at Asn357–Pro385. Residues Lys387 to Lys462 are positively charged C-terminal tail required for binding nucleosomes. The interval Ala394 to Lys462 is disordered. The segment covering Asn399–Thr447 has biased composition (low complexity). The span at Pro448 to Lys462 shows a compositional bias: basic residues.

It belongs to the peptidase C12 family. BAP1 subfamily. In terms of assembly, catalytic component of the polycomb repressive deubiquitinase (PR-DUB) complex, at least composed of caly/calypso, Asx and sba (MBD5/6 homolog). The PR-DUB complex associates with nucleosomes to mediate deubiquitination of histone H2AK118ub1 substrates; the association requires the positively charged C-terminal tail of caly, probably due to direct binding of DNA. Interacts (via ULD domain) with Asx (via DEUBAD domain); the interaction produces a stable heterodimer with a composite binding site for ubiquitin. Homodimerizes (via coiled-coil hinge-region between the UCH and ULD domains) to mediate assembly of 2 copies of the caly-Asx heterodimer into a bisymmetric tetramer; dimerization enhances PR-DUB association with nucleosomes.

The protein resides in the nucleus. The enzyme catalyses Thiol-dependent hydrolysis of ester, thioester, amide, peptide and isopeptide bonds formed by the C-terminal Gly of ubiquitin (a 76-residue protein attached to proteins as an intracellular targeting signal).. Its function is as follows. Catalytic component of the polycomb repressive deubiquitinase (PR-DUB) complex, a complex that specifically mediates deubiquitination of histone H2A monoubiquitinated at 'Lys-119' (H2AK118ub1). Mediates bisymmetric organization of the PR-DUB complex and is involved in association with nucleosomes to mediate deubiquitination. Does not deubiquitinate monoubiquitinated histone H2B. Required to maintain the transcriptionally repressive state of homeotic genes throughout development. The PR-DUB complex has weak or no activity toward 'Lys-48'- and 'Lys-63'-linked polyubiquitin chains. Polycomb group (PcG) protein. The protein is Ubiquitin carboxyl-terminal hydrolase calypso of Drosophila virilis (Fruit fly).